Here is a 427-residue protein sequence, read N- to C-terminus: Serine/threonine-protein kinase ssn3 (427 aa).

Residues 40–369 form the Protein kinase domain; the sequence is YHIVGFISSG…AQEALEHPYF (330 aa). ATP is bound by residues 46–54 and Lys70; that span reads ISSGTYGRV. The Proton acceptor role is filled by Asp172. Residues 390–399 show a composition bias toward basic and acidic residues; that stretch reads RRVTQDDNDI. A disordered region spans residues 390-427; it reads RRVTQDDNDIRSGSLPGTKRSGLPDDSLLGRATKRLKE.

The protein belongs to the protein kinase superfamily. CMGC Ser/Thr protein kinase family. CDC2/CDKX subfamily. Component of the srb8-11 complex, a regulatory module of the Mediator complex. Mg(2+) serves as cofactor.

It localises to the nucleus. The catalysed reaction is L-seryl-[protein] + ATP = O-phospho-L-seryl-[protein] + ADP + H(+). The enzyme catalyses L-threonyl-[protein] + ATP = O-phospho-L-threonyl-[protein] + ADP + H(+). It carries out the reaction [DNA-directed RNA polymerase] + ATP = phospho-[DNA-directed RNA polymerase] + ADP + H(+). Functionally, component of the srb8-11 complex. The srb8-11 complex is a regulatory module of the Mediator complex which is itself involved in regulation of basal and activated RNA polymerase II-dependent transcription. The srb8-11 complex may be involved in the transcriptional repression of a subset of genes regulated by Mediator. It may inhibit the association of the Mediator complex with RNA polymerase II to form the holoenzyme complex. The srb8-11 complex phosphorylates the C-terminal domain (CTD) of the largest subunit of RNA polymerase II. The sequence is that of Serine/threonine-protein kinase ssn3 (ssn3) from Aspergillus niger (strain ATCC MYA-4892 / CBS 513.88 / FGSC A1513).